The primary structure comprises 449 residues: Protein CapK (449 aa).

The protein operates within capsule biogenesis; capsule polysaccharide biosynthesis. Functionally, required for the biosynthesis of type 1 capsular polysaccharide. In Staphylococcus aureus, this protein is Protein CapK (capK).